Consider the following 753-residue polypeptide: 5-methyltetrahydropteroyltriglutamate--homocysteine methyltransferase (753 aa).

5-methyltetrahydropteroyltri-L-glutamate contacts are provided by residues 19–22 (RELK) and R113. L-homocysteine is bound by residues 430–432 (IGS) and E483. Residues 430–432 (IGS) and E483 each bind L-methionine. Residues 514-515 (RC) and W560 each bind 5-methyltetrahydropteroyltri-L-glutamate. L-homocysteine is bound at residue D598. D598 serves as a coordination point for L-methionine. Position 604 (E604) interacts with 5-methyltetrahydropteroyltri-L-glutamate. Residues H640, C642, and E664 each coordinate Zn(2+). The active-site Proton donor is the H693. A Zn(2+)-binding site is contributed by C725.

It belongs to the vitamin-B12 independent methionine synthase family. Zn(2+) serves as cofactor.

It carries out the reaction 5-methyltetrahydropteroyltri-L-glutamate + L-homocysteine = tetrahydropteroyltri-L-glutamate + L-methionine. It functions in the pathway amino-acid biosynthesis; L-methionine biosynthesis via de novo pathway; L-methionine from L-homocysteine (MetE route): step 1/1. Catalyzes the transfer of a methyl group from 5-methyltetrahydrofolate to homocysteine resulting in methionine formation. This chain is 5-methyltetrahydropteroyltriglutamate--homocysteine methyltransferase, found in Rhodococcus jostii (strain RHA1).